Reading from the N-terminus, the 379-residue chain is MTISDVPTQTLPAEGEVRLVDIGSLRLESGAVIDNVCIALQRWGELSPTRDNVVMVLHALTGDSHVTGPAGPGHSTPGWWDGMVGPGAPIDTNRWCAVATNVLGGCRGSTGPSSLARDGKPWGSRFPLISVRDQVEADMAALAALGITQVAAVVGGSMGGARALEWIVGHPDRVRSALLLAVGARATADQIGTQTTQIAAIKADPNWRNGDYHETGCRPEAGLKVARRFAHLTYRGEIELDSRFANDGQGGEDPADGGRYAIQSYLEHQGDKLLARFDAGSYVILTEALSRHDVGRGRDGIHAALRGCPVPVVVGGITSDRLYPLRLQQELADLLPGCAGLEVVDSIRGHDGFLVESEAVGELIHKTLRLAEDRSSRPW.

Residues 52–356 form the AB hydrolase-1 domain; it reads NVVMVLHALT…IRGHDGFLVE (305 aa). Ser-157 (nucleophile) is an active-site residue. Position 227 (Arg-227) interacts with substrate. Catalysis depends on residues Asp-320 and His-350. Position 351 (Asp-351) interacts with substrate.

It belongs to the AB hydrolase superfamily. MetX family. In terms of assembly, homodimer.

It is found in the cytoplasm. It catalyses the reaction L-homoserine + acetyl-CoA = O-acetyl-L-homoserine + CoA. The protein operates within amino-acid biosynthesis; L-methionine biosynthesis via de novo pathway; O-acetyl-L-homoserine from L-homoserine: step 1/1. Transfers an acetyl group from acetyl-CoA to L-homoserine, forming acetyl-L-homoserine. This is Homoserine O-acetyltransferase from Mycobacterium ulcerans (strain Agy99).